A 501-amino-acid chain; its full sequence is Lysine--tRNA ligase (501 aa).

Mg(2+)-binding residues include Glu411 and Glu418.

This sequence belongs to the class-II aminoacyl-tRNA synthetase family. In terms of assembly, homodimer. Mg(2+) serves as cofactor.

It is found in the cytoplasm. It carries out the reaction tRNA(Lys) + L-lysine + ATP = L-lysyl-tRNA(Lys) + AMP + diphosphate. The chain is Lysine--tRNA ligase from Clostridium perfringens (strain 13 / Type A).